Here is a 76-residue protein sequence, read N- to C-terminus: UPF0154 protein LCA_1273 (76 aa).

The chain crosses the membrane as a helical span at residues 3-23 (IGIGVLIFVIGALLGAVAGFF). The interval 55-76 (PSEKKLNQMMSSMKAQQKRSKK) is disordered.

Belongs to the UPF0154 family.

It is found in the cell membrane. The polypeptide is UPF0154 protein LCA_1273 (Latilactobacillus sakei subsp. sakei (strain 23K) (Lactobacillus sakei subsp. sakei)).